Here is a 90-residue protein sequence, read N- to C-terminus: DNA-binding protein HU-beta (90 aa).

The protein belongs to the bacterial histone-like protein family. Heterodimer of an alpha and a beta chain.

In terms of biological role, histone-like DNA-binding protein which is capable of wrapping DNA to stabilize it, and thus to prevent its denaturation under extreme environmental conditions. The chain is DNA-binding protein HU-beta (hupB) from Salmonella typhi.